A 364-amino-acid chain; its full sequence is tRNA-specific 2-thiouridylase MnmA 2 (364 aa).

ATP contacts are provided by residues 10–17 (GMSGGVDS) and M36. C106 (nucleophile) is an active-site residue. Cysteines 106 and 204 form a disulfide. G130 provides a ligand contact to ATP. The interaction with tRNA stretch occupies residues 154–156 (KDQ). The active-site Cysteine persulfide intermediate is the C204. Residues 310–311 (RY) are interaction with tRNA.

It belongs to the MnmA/TRMU family.

It localises to the cytoplasm. The catalysed reaction is S-sulfanyl-L-cysteinyl-[protein] + uridine(34) in tRNA + AH2 + ATP = 2-thiouridine(34) in tRNA + L-cysteinyl-[protein] + A + AMP + diphosphate + H(+). Functionally, catalyzes the 2-thiolation of uridine at the wobble position (U34) of tRNA, leading to the formation of s(2)U34. The chain is tRNA-specific 2-thiouridylase MnmA 2 from Caldanaerobacter subterraneus subsp. tengcongensis (strain DSM 15242 / JCM 11007 / NBRC 100824 / MB4) (Thermoanaerobacter tengcongensis).